The primary structure comprises 694 residues: LMBR1 domain-containing protein 2 homolog (694 aa).

Topologically, residues 1–3 (MAY) are extracellular. Residues 4-26 (LLSFGIVAALFLASISLYRYGNI) traverse the membrane as a helical segment. Over 27–30 (PRQH) the chain is Cytoplasmic. Residues 31 to 51 (ILVTLSVLTAWCFSFLIVFTI) traverse the membrane as a helical segment. The Extracellular portion of the chain corresponds to 52–106 (PLDVTSTLYRQCVEEHRPTPAPNVTNTSSATVGPPPQCQEPWGMVPASVFPNLWR). N74 and N77 each carry an N-linked (GlcNAc...) asparagine glycan. A helical membrane pass occupies residues 107–127 (IIYWSSQFLTWLIMPLMQSYL). Topologically, residues 128 to 144 (KAGDFTVKGKLKSALIE) are cytoplasmic. A helical membrane pass occupies residues 145–165 (NAIYYGSYLFICGVLLIYIAV). The Extracellular segment spans residues 166–181 (KGESLDWQKLKAIASS). A helical transmembrane segment spans residues 182-202 (ASNTWGLFLLILLLGYALVEV). The Cytoplasmic segment spans residues 203-381 (PRSLWNNAKP…ECLLKAPFLK (179 aa)). Residues 222 to 249 (KAAKLSTEKAEAEEHVDDILESLQGLSR) adopt a coiled-coil conformation. Residues 382–402 (TMCVLTATMSAMVVWSELTFF) form a helical membrane-spanning segment. Residues 403–426 (SRHPVLSIFANVIYVAKESYDFFT) lie on the Extracellular side of the membrane. A helical transmembrane segment spans residues 427–447 (IEVFSMVVLCYFFYCTYSTIL). At 448–467 (RIRFLNLYYLAPHHQTNEHS) the chain is on the cytoplasmic side. A helical transmembrane segment spans residues 468-488 (LIFSGMLLCRLTPPMCLNFLG). Topologically, residues 489-514 (LIHMDTHIIPNRIMETVYTQIMGHMD) are extracellular. A helical membrane pass occupies residues 515–535 (VIGIISNGFNIYFPMCMLAFC). At 536 to 694 (LATWFSLGSR…PPPRGLFDDV (159 aa)) the chain is on the cytoplasmic side. Residues 564–592 (ELVQEGKDLIAREKRRRQRAEEAMARRRD) adopt a coiled-coil conformation. A disordered region spans residues 673 to 694 (DYEAETDGRIVGPPPRGLFDDV).

The protein belongs to the LIMR family.

It localises to the membrane. The polypeptide is LMBR1 domain-containing protein 2 homolog (Drosophila melanogaster (Fruit fly)).